Consider the following 282-residue polypeptide: Bifunctional protein FolD (282 aa).

Residues 165-167 (GAS) and I231 contribute to the NADP(+) site.

Belongs to the tetrahydrofolate dehydrogenase/cyclohydrolase family. In terms of assembly, homodimer.

The enzyme catalyses (6R)-5,10-methylene-5,6,7,8-tetrahydrofolate + NADP(+) = (6R)-5,10-methenyltetrahydrofolate + NADPH. The catalysed reaction is (6R)-5,10-methenyltetrahydrofolate + H2O = (6R)-10-formyltetrahydrofolate + H(+). Its pathway is one-carbon metabolism; tetrahydrofolate interconversion. Its function is as follows. Catalyzes the oxidation of 5,10-methylenetetrahydrofolate to 5,10-methenyltetrahydrofolate and then the hydrolysis of 5,10-methenyltetrahydrofolate to 10-formyltetrahydrofolate. The chain is Bifunctional protein FolD from Francisella philomiragia subsp. philomiragia (strain ATCC 25017 / CCUG 19701 / FSC 153 / O#319-036).